Consider the following 367-residue polypeptide: Tetraacyldisaccharide 4'-kinase (367 aa).

68–75 contributes to the ATP binding site; sequence VLGGSGKT.

This sequence belongs to the LpxK family.

The enzyme catalyses a lipid A disaccharide + ATP = a lipid IVA + ADP + H(+). Its pathway is glycolipid biosynthesis; lipid IV(A) biosynthesis; lipid IV(A) from (3R)-3-hydroxytetradecanoyl-[acyl-carrier-protein] and UDP-N-acetyl-alpha-D-glucosamine: step 6/6. Transfers the gamma-phosphate of ATP to the 4'-position of a tetraacyldisaccharide 1-phosphate intermediate (termed DS-1-P) to form tetraacyldisaccharide 1,4'-bis-phosphate (lipid IVA). This Chlamydia abortus (strain DSM 27085 / S26/3) (Chlamydophila abortus) protein is Tetraacyldisaccharide 4'-kinase.